We begin with the raw amino-acid sequence, 207 residues long: Urease accessory protein UreE (207 aa).

A compositionally biased stretch (basic and acidic residues) spans 170-194 (EHHGHSHSHSHDHDHDHDHDHDHQH). Residues 170 to 207 (EHHGHSHSHSHDHDHDHDHDHDHQHGPCCSHGHHHGHR) form a disordered region.

It belongs to the UreE family.

The protein localises to the cytoplasm. In terms of biological role, involved in urease metallocenter assembly. Binds nickel. Probably functions as a nickel donor during metallocenter assembly. This is Urease accessory protein UreE from Burkholderia pseudomallei (strain 1106a).